The following is a 520-amino-acid chain: Probable cytochrome P450 6v1 (520 aa).

Position 465 (Cys465) interacts with heme.

The protein belongs to the cytochrome P450 family. The cofactor is heme.

The protein resides in the endoplasmic reticulum membrane. Its subcellular location is the microsome membrane. May be involved in the metabolism of insect hormones and in the breakdown of synthetic insecticides. This is Probable cytochrome P450 6v1 (Cyp6v1) from Drosophila melanogaster (Fruit fly).